The primary structure comprises 315 residues: ADP/ATP translocase 4 (315 aa).

Over 1–19 (MHREPAKKKAEKRLFDASS) the chain is Mitochondrial intermembrane. The Solcar 1 repeat unit spans residues 18–110 (SSFGKDLLAG…FAFKDKYKQL (93 aa)). A helical transmembrane segment spans residues 20 to 49 (FGKDLLAGGVAAAVSKTAVAPIERVKLLLQ). Over 50-86 (VQASSKQISPEARYKGMVDCLVRIPREQGFFSFWRGN) the chain is Mitochondrial matrix. A helical transmembrane segment spans residues 87-111 (LANVIRYFPTQALNFAFKDKYKQLF). ADP is bound by residues R92 and K104. The Mitochondrial intermembrane portion of the chain corresponds to 112–121 (MSGVNKEKQF). Residues 122 to 142 (WRWFLANLASGGAAGATSLCV) traverse the membrane as a helical segment. Solcar repeat units lie at residues 123 to 213 (RWFL…VKGL) and 220 to 307 (TPFL…IKEF). Over 143–190 (VYPLDFARTRLGVDIGKGPEERQFKGLGDCIMKIAKSDGIAGLYQGFG) the chain is Mitochondrial matrix. A helical transmembrane segment spans residues 191–211 (VSVQGIIVYRASYFGAYDTVK). Over 212–222 (GLLPKPKKTPF) the chain is Mitochondrial intermembrane. Residues 223 to 243 (LVSFFIAQVVTTCSGILSYPF) traverse the membrane as a helical segment. Over 244-283 (DTVRRRMMMQSGEAKRQYKGTLDCFVKIYQHEGISSFFRG) the chain is Mitochondrial matrix. R247 provides a ligand contact to ADP. Residues 247–252 (RRRMMM) form an important for transport activity region. The Nucleotide carrier signature motif motif lies at 247-252 (RRRMMM). Residues 284–301 (AFSNVLRGTGGALVLVLY) traverse the membrane as a helical segment. Topologically, residues 302–315 (DKIKEFFHIDIGGR) are mitochondrial intermembrane.

Belongs to the mitochondrial carrier (TC 2.A.29) family. In terms of assembly, monomer. In terms of tissue distribution, expressed in brain, liver, sperm and testis. In testis, expressed at higher level in spermatocytes, while it is expressed at lower level in spermatogonial cells. Expressed in erythrocytes (at protein level).

It localises to the mitochondrion inner membrane. It is found in the membrane. The protein localises to the cell projection. The protein resides in the cilium. Its subcellular location is the flagellum membrane. It catalyses the reaction ADP(in) + ATP(out) = ADP(out) + ATP(in). The enzyme catalyses dATP(out) + ADP(in) = dATP(in) + ADP(out). The catalysed reaction is dADP(in) + ADP(out) = dADP(out) + ADP(in). It carries out the reaction H(+)(in) = H(+)(out). The matrix-open state (m-state) is inhibited by the membrane-permeable bongkrekic acid (BKA). The cytoplasmic-open state (c-state) is inhibited by the membrane-impermeable toxic inhibitor carboxyatractyloside (CATR). Proton transporter activity is inhibited by ADP:ATP antiporter activity. Its function is as follows. ADP:ATP antiporter that mediates import of ADP into the mitochondrial matrix for ATP synthesis, and export of ATP out to fuel the cell. Cycles between the cytoplasmic-open state (c-state) and the matrix-open state (m-state): operates by the alternating access mechanism with a single substrate-binding site intermittently exposed to either the cytosolic (c-state) or matrix (m-state) side of the inner mitochondrial membrane. Specifically required during spermatogenesis, probably to mediate ADP:ATP exchange in spermatocytes. Large ATP supplies from mitochondria may be critical for normal progression of spermatogenesis during early stages of meiotic prophase I, including DNA double-strand break repair and chromosomal synapsis. In addition to its ADP:ATP antiporter activity, also involved in mitochondrial uncoupling and mitochondrial permeability transition pore (mPTP) activity. Plays a role in mitochondrial uncoupling by acting as a proton transporter: proton transport uncouples the proton flows via the electron transport chain and ATP synthase to reduce the efficiency of ATP production and cause mitochondrial thermogenesis. Proton transporter activity is inhibited by ADP:ATP antiporter activity, suggesting that SLC25A31/ANT4 acts as a master regulator of mitochondrial energy output by maintaining a delicate balance between ATP production (ADP:ATP antiporter activity) and thermogenesis (proton transporter activity). Proton transporter activity requires free fatty acids as cofactor, but does not transport it. Among nucleotides, may also exchange ADP for dATP and dADP. Also plays a key role in mPTP opening, a non-specific pore that enables free passage of the mitochondrial membranes to solutes of up to 1.5 kDa, and which contributes to cell death. It is however unclear if SLC25A31/ANT4 constitutes a pore-forming component of mPTP or regulates it. This Homo sapiens (Human) protein is ADP/ATP translocase 4.